Reading from the N-terminus, the 403-residue chain is Phosphopentomutase (403 aa).

Residues Asp13, Asp298, His303, Asp339, His340, and His351 each coordinate Mn(2+).

It belongs to the phosphopentomutase family. Requires Mn(2+) as cofactor.

It is found in the cytoplasm. It catalyses the reaction 2-deoxy-alpha-D-ribose 1-phosphate = 2-deoxy-D-ribose 5-phosphate. It carries out the reaction alpha-D-ribose 1-phosphate = D-ribose 5-phosphate. It functions in the pathway carbohydrate degradation; 2-deoxy-D-ribose 1-phosphate degradation; D-glyceraldehyde 3-phosphate and acetaldehyde from 2-deoxy-alpha-D-ribose 1-phosphate: step 1/2. In terms of biological role, isomerase that catalyzes the conversion of deoxy-ribose 1-phosphate (dRib-1-P) and ribose 1-phosphate (Rib-1-P) to deoxy-ribose 5-phosphate (dRib-5-P) and ribose 5-phosphate (Rib-5-P), respectively. The chain is Phosphopentomutase from Streptococcus equi subsp. zooepidemicus (strain H70).